The sequence spans 155 residues: Aspartate carbamoyltransferase regulatory chain (155 aa).

Residues Cys-113, Cys-118, Cys-139, and Cys-142 each coordinate Zn(2+).

Belongs to the PyrI family. In terms of assembly, contains catalytic and regulatory chains. The cofactor is Zn(2+).

Functionally, involved in allosteric regulation of aspartate carbamoyltransferase. The protein is Aspartate carbamoyltransferase regulatory chain of Methanosphaerula palustris (strain ATCC BAA-1556 / DSM 19958 / E1-9c).